Here is a 385-residue protein sequence, read N- to C-terminus: Mannitol-1-phosphate 5-dehydrogenase (385 aa).

Position 3–14 (3–14) interacts with NAD(+); that stretch reads ALQFGAGNIGRG.

It belongs to the mannitol dehydrogenase family.

The catalysed reaction is D-mannitol 1-phosphate + NAD(+) = beta-D-fructose 6-phosphate + NADH + H(+). This is Mannitol-1-phosphate 5-dehydrogenase from Buchnera aphidicola subsp. Acyrthosiphon pisum (strain Tuc7).